Here is a 360-residue protein sequence, read N- to C-terminus: Dual-specificity RNA methyltransferase RlmN (360 aa).

Catalysis depends on E91, which acts as the Proton acceptor. The Radical SAM core domain occupies 110 to 343; sequence RSEKYTVCIS…CTIRESKGLD (234 aa). C117 and C348 are disulfide-bonded. Positions 124, 128, and 131 each coordinate [4Fe-4S] cluster. S-adenosyl-L-methionine contacts are provided by residues 174-175, S206, 229-231, and N305; these read GE and SLH. The active-site S-methylcysteine intermediate is the C348.

This sequence belongs to the radical SAM superfamily. RlmN family. [4Fe-4S] cluster is required as a cofactor.

It localises to the cytoplasm. It catalyses the reaction adenosine(2503) in 23S rRNA + 2 reduced [2Fe-2S]-[ferredoxin] + 2 S-adenosyl-L-methionine = 2-methyladenosine(2503) in 23S rRNA + 5'-deoxyadenosine + L-methionine + 2 oxidized [2Fe-2S]-[ferredoxin] + S-adenosyl-L-homocysteine. The enzyme catalyses adenosine(37) in tRNA + 2 reduced [2Fe-2S]-[ferredoxin] + 2 S-adenosyl-L-methionine = 2-methyladenosine(37) in tRNA + 5'-deoxyadenosine + L-methionine + 2 oxidized [2Fe-2S]-[ferredoxin] + S-adenosyl-L-homocysteine. Specifically methylates position 2 of adenine 2503 in 23S rRNA and position 2 of adenine 37 in tRNAs. m2A2503 modification seems to play a crucial role in the proofreading step occurring at the peptidyl transferase center and thus would serve to optimize ribosomal fidelity. The sequence is that of Dual-specificity RNA methyltransferase RlmN from Aliarcobacter butzleri (strain RM4018) (Arcobacter butzleri).